Reading from the N-terminus, the 308-residue chain is MAGKSKILFIGGTGYIGKFIVEASAKAGHDTFVLVRESTLSNPTKTKLIDTFKSFGVTFVHGDLYDHESLVKAIKQVDVVISTVGHALLADQVKLIAAIKEAGNVKRFFPSEFGNDVDRVHAVEPAKAAFNTKAQIRRVVEAEGIPFTYVATFFFAGYSLPNLAQPGAAGPPNDKVVILGHGNTKAVFNKEEDIGTYTINAVDDPKTLNKILYIKPPHNIITLNELVSLWEKKTGKNLERLYVPEEQVLKNIQEASVPMNVGLSIYHTAFVKGDHTNFEIEPSFGVEASEVYPDVKYTPIDEILNQYV.

Residues 11-17, Arg36, and Lys45 contribute to the NADP(+) site; that span reads GGTGYIG. Lys133 (proton acceptor) is an active-site residue. Arg137 is an NADP(+) binding site.

The protein belongs to the NmrA-type oxidoreductase family. Isoflavone reductase subfamily.

The protein localises to the cytoplasm. This Solanum tuberosum (Potato) protein is Isoflavone reductase homolog.